Reading from the N-terminus, the 658-residue chain is Ubiquilin-3 (658 aa).

The Ubiquitin-like domain occupies 22 to 96 (IRVTVKTPKD…VHLVIKMQRR (75 aa)). Residues 194–233 (NPHMQHLIQQNPEIGHILNNPEIMRQTMEFLRNPSMMQEM) enclose the STI1 domain. A compositionally biased stretch (low complexity) spans 280–291 (TATTASTTTTSS). 2 disordered regions span residues 280 to 336 (TATT…RNRL) and 362 to 478 (YLQG…PESP). The span at 312 to 323 (VSGGRQGRGGRQ) shows a compositional bias: gly residues. Composition is skewed to polar residues over residues 362 to 379 (YLQGTVPTSNPSQESPLS), 389 to 400 (SSPKSGSGQSLP), and 438 to 469 (TGPSTSLPNLTSQIGDSANRSSFVSTPSSLMS). The UBA domain occupies 614–658 (QLEAHFRVQLEQLRAMGFLNLEANLQALIATEGDVDAAVEKLRKS).

As to expression, testis-specific (at protein level).

In Mus musculus (Mouse), this protein is Ubiquilin-3 (Ubqln3).